We begin with the raw amino-acid sequence, 1175 residues long: Pyruvate carboxylase (1175 aa).

The 453-residue stretch at 22–474 (NANKILVANR…WTTFIDDTPS (453 aa)) folds into the Biotin carboxylation domain. ATP contacts are provided by Lys140, Glu224, and His259. Residues 144–341 (RNLAGKCNVP…IVAAQIQIAA (198 aa)) enclose the ATP-grasp domain. The active site involves Arg316. Positions 561-828 (CLIMDTTWRD…NTGITEQNAR (268 aa)) constitute a Pyruvate carboxyltransferase domain. Residues 569–573 (RDAHQ) and Arg642 contribute to the substrate site. Asp570 provides a ligand contact to a divalent metal cation. Lys738, His768, and His770 together coordinate a divalent metal cation. The residue at position 738 (Lys738) is an N6-carboxylysine. A substrate-binding site is contributed by Thr902. Positions 1099–1174 (KADAHNPNEV…DAGDLICKIT (76 aa)) constitute a Biotinyl-binding domain. An N6-biotinyllysine modification is found at Lys1140.

The cofactor is biotin. Requires Zn(2+) as cofactor.

The protein resides in the cytoplasm. It catalyses the reaction hydrogencarbonate + pyruvate + ATP = oxaloacetate + ADP + phosphate + H(+). It participates in carbohydrate biosynthesis; gluconeogenesis. Pyruvate carboxylase catalyzes a 2-step reaction, involving the ATP-dependent carboxylation of the covalently attached biotin in the first step and the transfer of the carboxyl group to pyruvate in the second. The protein is Pyruvate carboxylase (PYC) of Pichia angusta (Yeast).